The sequence spans 167 residues: Crossover junction endodeoxyribonuclease RuvC (167 aa).

Active-site residues include Asp-7, Glu-67, and Asp-139. 3 residues coordinate Mg(2+): Asp-7, Glu-67, and Asp-139.

This sequence belongs to the RuvC family. Homodimer which binds Holliday junction (HJ) DNA. The HJ becomes 2-fold symmetrical on binding to RuvC with unstacked arms; it has a different conformation from HJ DNA in complex with RuvA. In the full resolvosome a probable DNA-RuvA(4)-RuvB(12)-RuvC(2) complex forms which resolves the HJ. The cofactor is Mg(2+).

It localises to the cytoplasm. The catalysed reaction is Endonucleolytic cleavage at a junction such as a reciprocal single-stranded crossover between two homologous DNA duplexes (Holliday junction).. The RuvA-RuvB-RuvC complex processes Holliday junction (HJ) DNA during genetic recombination and DNA repair. Endonuclease that resolves HJ intermediates. Cleaves cruciform DNA by making single-stranded nicks across the HJ at symmetrical positions within the homologous arms, yielding a 5'-phosphate and a 3'-hydroxyl group; requires a central core of homology in the junction. The consensus cleavage sequence is 5'-(A/T)TT(C/G)-3'. Cleavage occurs on the 3'-side of the TT dinucleotide at the point of strand exchange. HJ branch migration catalyzed by RuvA-RuvB allows RuvC to scan DNA until it finds its consensus sequence, where it cleaves and resolves the cruciform DNA. The protein is Crossover junction endodeoxyribonuclease RuvC of Akkermansia muciniphila (strain ATCC BAA-835 / DSM 22959 / JCM 33894 / BCRC 81048 / CCUG 64013 / CIP 107961 / Muc).